A 479-amino-acid polypeptide reads, in one-letter code: Muscarinic acetylcholine receptor M4 (479 aa).

Residues 1–30 (MANFTPVNGSSANQSVRLVTTAHNHLETVE) lie on the Extracellular side of the membrane. Asparagine 8 and asparagine 13 each carry an N-linked (GlcNAc...) asparagine glycan. The chain crosses the membrane as a helical span at residues 31-53 (MVFIATVTGSLSLVTVVGNILVM). The Cytoplasmic segment spans residues 54-67 (LSIKVNRQLQTVNN). Residues 68 to 88 (YFLFSLACADLIIGAFSMNLY) form a helical membrane-spanning segment. Topologically, residues 89–105 (TLYIIKGYWPLGAVVCD) are extracellular. A disulfide bond links cysteine 104 and cysteine 184. The helical transmembrane segment at 106 to 127 (LWLALDYVVSNASVMNLLIISF) threads the bilayer. Topologically, residues 128–147 (DRYFCVTKPLTYPARRTTKM) are cytoplasmic. Residues 148–170 (AGLMIAAAWVLSFVLWAPAILFW) traverse the membrane as a helical segment. The Extracellular portion of the chain corresponds to 171 to 192 (QFVVGKRTVPDNQCFIQFLSNP). Residues 193 to 215 (AVTFGTAIAAFYLPVVIMTVLYI) traverse the membrane as a helical segment. Topologically, residues 216–401 (HISLASRSRV…AARERKVTRT (186 aa)) are cytoplasmic. The segment at 271 to 334 (LEEAPPPALP…APTLQPRTLN (64 aa)) is disordered. A compositionally biased stretch (pro residues) spans 274–285 (APPPALPPPPRP). A compositionally biased stretch (polar residues) spans 293 to 303 (NESSSGSATQN). A compositionally biased stretch (low complexity) spans 310 to 333 (TELSTTEAATTPALPAPTLQPRTL). The helical transmembrane segment at 402 to 422 (IFAILLAFILTWTPYNVMVLV) threads the bilayer. At 423–436 (NTFCQSCIPERVWS) the chain is on the extracellular side. The chain crosses the membrane as a helical span at residues 437-456 (IGYWLCYVNSTINPACYALC). Residues 457 to 479 (NATFKKTFRHLLLCQYRNIGTAR) lie on the Cytoplasmic side of the membrane. Threonine 459, threonine 463, and threonine 477 each carry phosphothreonine.

It belongs to the G-protein coupled receptor 1 family. Muscarinic acetylcholine receptor subfamily. CHRM4 sub-subfamily.

The protein resides in the cell membrane. The protein localises to the postsynaptic cell membrane. The muscarinic acetylcholine receptor mediates various cellular responses, including inhibition of adenylate cyclase, breakdown of phosphoinositides and modulation of potassium channels through the action of G proteins. Primary transducing effect is inhibition of adenylate cyclase. This chain is Muscarinic acetylcholine receptor M4 (Chrm4), found in Mus musculus (Mouse).